Here is a 273-residue protein sequence, read N- to C-terminus: Dermonecrotic toxin LdSicTox-alphaIB1av (273 aa).

The active site involves histidine 5. 2 residues coordinate Mg(2+): glutamate 25 and aspartate 27. The active-site Nucleophile is histidine 41. 2 cysteine pairs are disulfide-bonded: cysteine 45-cysteine 51 and cysteine 47-cysteine 190. Aspartate 85 serves as a coordination point for Mg(2+). The N-linked (GlcNAc...) asparagine glycan is linked to asparagine 250.

It belongs to the arthropod phospholipase D family. Class II subfamily. Mg(2+) serves as cofactor. In terms of tissue distribution, expressed by the venom gland.

It localises to the secreted. The enzyme catalyses an N-(acyl)-sphingosylphosphocholine = an N-(acyl)-sphingosyl-1,3-cyclic phosphate + choline. It carries out the reaction an N-(acyl)-sphingosylphosphoethanolamine = an N-(acyl)-sphingosyl-1,3-cyclic phosphate + ethanolamine. The catalysed reaction is a 1-acyl-sn-glycero-3-phosphocholine = a 1-acyl-sn-glycero-2,3-cyclic phosphate + choline. It catalyses the reaction a 1-acyl-sn-glycero-3-phosphoethanolamine = a 1-acyl-sn-glycero-2,3-cyclic phosphate + ethanolamine. Functionally, dermonecrotic toxins cleave the phosphodiester linkage between the phosphate and headgroup of certain phospholipids (sphingolipid and lysolipid substrates), forming an alcohol (often choline) and a cyclic phosphate. This toxin acts on sphingomyelin (SM). It may also act on ceramide phosphoethanolamine (CPE), lysophosphatidylcholine (LPC) and lysophosphatidylethanolamine (LPE), but not on lysophosphatidylserine (LPS), and lysophosphatidylglycerol (LPG). It acts by transphosphatidylation, releasing exclusively cyclic phosphate products as second products. Induces dermonecrosis, hemolysis, increased vascular permeability, edema, inflammatory response, and platelet aggregation. This chain is Dermonecrotic toxin LdSicTox-alphaIB1av, found in Loxosceles deserta (Desert recluse spider).